Here is a 366-residue protein sequence, read N- to C-terminus: Ribosomal RNA large subunit methyltransferase M (366 aa).

S-adenosyl-L-methionine is bound by residues Ser188, 221–224 (CPGG), Asp240, Asp260, and Asp277. Lys306 acts as the Proton acceptor in catalysis.

The protein belongs to the class I-like SAM-binding methyltransferase superfamily. RNA methyltransferase RlmE family. RlmM subfamily. Monomer.

Its subcellular location is the cytoplasm. The enzyme catalyses cytidine(2498) in 23S rRNA + S-adenosyl-L-methionine = 2'-O-methylcytidine(2498) in 23S rRNA + S-adenosyl-L-homocysteine + H(+). In terms of biological role, catalyzes the 2'-O-methylation at nucleotide C2498 in 23S rRNA. In Escherichia fergusonii (strain ATCC 35469 / DSM 13698 / CCUG 18766 / IAM 14443 / JCM 21226 / LMG 7866 / NBRC 102419 / NCTC 12128 / CDC 0568-73), this protein is Ribosomal RNA large subunit methyltransferase M.